Here is a 122-residue protein sequence, read N- to C-terminus: MSLTNEKIVEAIAEKSIMEVMELVKAIEDRFGVSAAAPVMVSGSAAAAAPVEEQTEFTVTLKEAGAKKVEVIKAVRAVTGLGLKEAKDLTEAGGILKEAVSKEEAEKVKKELEAAGATVEVK.

This sequence belongs to the bacterial ribosomal protein bL12 family. In terms of assembly, homodimer. Part of the ribosomal stalk of the 50S ribosomal subunit. Forms a multimeric L10(L12)X complex, where L10 forms an elongated spine to which 2 to 4 L12 dimers bind in a sequential fashion. Binds GTP-bound translation factors.

Its function is as follows. Forms part of the ribosomal stalk which helps the ribosome interact with GTP-bound translation factors. Is thus essential for accurate translation. This Xylella fastidiosa (strain M23) protein is Large ribosomal subunit protein bL12.